The sequence spans 160 residues: MLSPKRTKFRKQHRGRMRGVASKGNTIAFGQFALQAQDCGWVTARQIEASRRAMTRYIKRGGQIWIRIFPDKPVTMRPAETRMGSGKGNPEFWVAVVKPGRILFEMGGEDITEETAKEAMRLAQYKLPVKTKFISIDKNLENSSQENTKDSKKSQEEVKQ.

The tract at residues Lys-138 to Gln-160 is disordered. Over residues Asn-147–Gln-160 the composition is skewed to basic and acidic residues.

It belongs to the universal ribosomal protein uL16 family. As to quaternary structure, part of the 50S ribosomal subunit.

Its function is as follows. Binds 23S rRNA and is also seen to make contacts with the A and possibly P site tRNAs. The polypeptide is Large ribosomal subunit protein uL16 (Prochlorococcus marinus (strain AS9601)).